The primary structure comprises 252 residues: Mitochondrial cardiolipin hydrolase (252 aa).

Topologically, residues 1 to 4 (MGRL) are mitochondrial intermembrane. The tract at residues 1-39 (MGRLSWQVAAAAAVGLALTLEALPWVLRWLRSRRRRPRR) is required for mitochondrial localization. A helical transmembrane segment spans residues 5-27 (SWQVAAAAAVGLALTLEALPWVL). At 28–252 (RWLRSRRRRP…TCGTSSESQT (225 aa)) the chain is on the cytoplasmic side. A C3H1-type; atypical zinc finger spans residues 45-78 (PSQVTCTEALLRAPGAELAELPEGCPCGLPHGES). In terms of domain architecture, PLD phosphodiesterase spans 151–178 (DPGYMHHKFAIVDKRVLITGSLNWTTQA). Active-site residues include H156, K158, and D163.

This sequence belongs to the phospholipase D family. MitoPLD/Zucchini subfamily. As to quaternary structure, homodimer. Interacts with MOV10L1. Interacts with MIGA1 and MIGA2; possibly facilitating homodimer formation. Interacts with GK2. In terms of tissue distribution, predominantly expressed in testis and ovary, but not limited to gonads (at protein level). It is also found in brain, heart, pituitary gland, prostate, pancreas, thyroid, bone marrow, lung and muscle.

It is found in the mitochondrion outer membrane. It localises to the golgi apparatus. It carries out the reaction a cardiolipin + H2O = a 1,2-diacyl-sn-glycero-3-phospho-(1'-sn-glycerol) + a 1,2-diacyl-sn-glycero-3-phosphate + H(+). MYC stimulates its phospholipase activity. MIGA1 and MIGA2 increase PLD6 self-association affinity and affects the homodimer conformation facilitating its phospholipase activity over the nuclease activity. Single stranded DNA (ssDNA) hydrolase activity does not depend upon, but is stimulated by the presence of Ca(2+) and Mn(2+). Its function is as follows. Presents phospholipase and nuclease activities, depending on the different physiological conditions. Interaction with Mitoguardin (MIGA1 or MIGA2) affects the dimer conformation, facilitating the lipase activity over the nuclease activity. Plays a key role in mitochondrial fusion and fission via its phospholipase activity. In its phospholipase role, it uses the mitochondrial lipid cardiolipin as substrate to generate phosphatidate (PA or 1,2-diacyl-sn-glycero-3-phosphate), a second messenger signaling lipid. Production of PA facilitates Mitofusin-mediated fusion, whereas the cleavage of PA by the Lipin family of phosphatases produces diacylgycerol (DAG) which promotes mitochondrial fission. Both Lipin and DAG regulate mitochondrial dynamics and membrane fusion/fission, important processes for adapting mitochondrial metabolism to changes in cell physiology. Mitochondrial fusion enables cells to cope with the increased nucleotide demand during DNA synthesis. Mitochondrial function and dynamics are closely associated with biological processes such as cell growth, proliferation, and differentiation. Mediator of MYC activity, promotes mitochondrial fusion and activates AMPK which in turn inhibits YAP/TAZ, thereby inducing cell growth and proliferation. The endonuclease activity plays a critical role in PIWI-interacting RNA (piRNA) biogenesis during spermatogenesis. Implicated in spermatogenesis and sperm fertility in testicular germ cells, its single strand-specific nuclease activity is critical for the biogenesis/maturation of PIWI-interacting RNA (piRNA). MOV10L1 selectively binds to piRNA precursors and funnels them to the endonuclease that catalyzes the first cleavage step of piRNA processing to generate piRNA intermediate fragments that are subsequently loaded to Piwi proteins. Cleaves either DNA or RNA substrates with similar affinity, producing a 5' phosphate end, in this way it participates in the processing of primary piRNA transcripts. piRNAs provide essential protection against the activity of mobile genetic elements. piRNA-mediated transposon silencing is thus critical for maintaining genome stability, in particular in germline cells when transposons are mobilized as a consequence of wide-spread genomic demethylation. PA may act as signaling molecule in the recognition/transport of the precursor RNAs of primary piRNAs. Interacts with tesmin in testes, suggesting a role in spermatogenesis via association with its interacting partner. The sequence is that of Mitochondrial cardiolipin hydrolase (PLD6) from Homo sapiens (Human).